We begin with the raw amino-acid sequence, 437 residues long: Chaperone SurA (437 aa).

An N-terminal signal peptide occupies residues 1–27; that stretch reads MHNHVFKTIARHGLIALFFFFSISAMA. PpiC domains lie at 179-280 and 290-388; these read QDEF…KLLN and VDQT…QVLE.

The protein resides in the periplasm. It catalyses the reaction [protein]-peptidylproline (omega=180) = [protein]-peptidylproline (omega=0). Functionally, chaperone involved in the correct folding and assembly of outer membrane proteins. Recognizes specific patterns of aromatic residues and the orientation of their side chains, which are found more frequently in integral outer membrane proteins. May act in both early periplasmic and late outer membrane-associated steps of protein maturation. This Methylobacillus flagellatus (strain ATCC 51484 / DSM 6875 / VKM B-1610 / KT) protein is Chaperone SurA.